The following is a 131-amino-acid chain: Small ribosomal subunit protein uS11 (131 aa).

This sequence belongs to the universal ribosomal protein uS11 family. In terms of assembly, part of the 30S ribosomal subunit. Interacts with proteins S7 and S18. Binds to IF-3.

Functionally, located on the platform of the 30S subunit, it bridges several disparate RNA helices of the 16S rRNA. Forms part of the Shine-Dalgarno cleft in the 70S ribosome. The chain is Small ribosomal subunit protein uS11 from Buchnera aphidicola subsp. Acyrthosiphon pisum (strain 5A).